Here is a 213-residue protein sequence, read N- to C-terminus: Large ribosomal subunit protein uL1 (213 aa).

The protein belongs to the universal ribosomal protein uL1 family. As to quaternary structure, part of the 50S ribosomal subunit.

Its function is as follows. Binds directly to 23S rRNA. Probably involved in E site tRNA release. Protein L1 is also a translational repressor protein, it controls the translation of its operon by binding to its mRNA. This is Large ribosomal subunit protein uL1 from Methanococcus maripaludis (strain C5 / ATCC BAA-1333).